We begin with the raw amino-acid sequence, 203 residues long: Protein GrpE 2 (203 aa).

A compositionally biased stretch (basic and acidic residues) spans 1–12 (MPTRPQEPDRAA). A disordered region spans residues 1–64 (MPTRPQEPDR…APAEDEYTTA (64 aa)). Over residues 45-56 (GEPGPDAAGPAP) the composition is skewed to low complexity.

The protein belongs to the GrpE family. Homodimer.

The protein resides in the cytoplasm. Participates actively in the response to hyperosmotic and heat shock by preventing the aggregation of stress-denatured proteins, in association with DnaK and GrpE. It is the nucleotide exchange factor for DnaK and may function as a thermosensor. Unfolded proteins bind initially to DnaJ; upon interaction with the DnaJ-bound protein, DnaK hydrolyzes its bound ATP, resulting in the formation of a stable complex. GrpE releases ADP from DnaK; ATP binding to DnaK triggers the release of the substrate protein, thus completing the reaction cycle. Several rounds of ATP-dependent interactions between DnaJ, DnaK and GrpE are required for fully efficient folding. In Streptomyces avermitilis (strain ATCC 31267 / DSM 46492 / JCM 5070 / NBRC 14893 / NCIMB 12804 / NRRL 8165 / MA-4680), this protein is Protein GrpE 2.